We begin with the raw amino-acid sequence, 391 residues long: MFFTKVLNNQVANGLKQLPVHKRVQMAYDLHIPNKTVNPNLNIRSHEPIVFVHGIFGSKKNYRHDCQKIANVTHTPVYTIDLRNHGQSMHALPFDYETLAQDVTDFCEDHGLKKVNLIGYSLGAKICMLTMLQNPDLVRSGVIIDNSPIEQPHIEIFLTQFIKSMLHVLNSTKIRADDKDWKSKANQAMRRYIPNGGIRDYLLANLINKVPKGYKSPVINYDDGYIHFQNPVRHMTEVAVKNVSAWPTEHVKGLKFEGQVRFLKGTKSAFIDEKGLEAIKEYFPNYSLSELNATHFILNERPQEYVKLICDFIKVNRYKSLQEHIRHVENFSSAELEARHNAEHERQMEELRQLTQTTPTAEQVKTIDNLASKVDLSATERQQQQNKEITV.

A mitochondrion-targeting transit peptide spans 1 to 24 (MFFTKVLNNQVANGLKQLPVHKRV). Positions 48-154 (PIVFVHGIFG…DNSPIEQPHI (107 aa)) constitute an AB hydrolase-1 domain. Catalysis depends on charge relay system residues Ser-121, Asp-145, and His-295.

This sequence belongs to the AB hydrolase superfamily.

It is found in the mitochondrion. It catalyses the reaction ethanol + acetyl-CoA = ethyl acetate + CoA. The enzyme catalyses acetyl-CoA + H2O = acetate + CoA + H(+). It carries out the reaction ethyl acetate + H2O = ethanol + acetate + H(+). Its activity is regulated as follows. By ethanol. Thioesterase and esterase reactions are highly repressed in the presence of high ethanol concentrations. Alcohol acetyltransferase that catalyzes the synthesis of ethyl acetate from ethanol and acetyl-CoA. Can also function as a thioesterase by hydrolyzing acetyl-CoA in the absence of ethanol, as well as esterase hydrolyzing ethyl acetate. This Wickerhamomyces anomalus (strain ATCC 58044 / CBS 1984 / NCYC 433 / NRRL Y-366-8) (Yeast) protein is Ethanol acetyltransferase 1 (EAT1).